Reading from the N-terminus, the 330-residue chain is Putative glycosyltransferase ORF330 (330 aa).

It belongs to the glycosyltransferase group 1 family. Glycosyltransferase 4 subfamily.

This Acidianus filamentous virus 2 (isolate Italy/Pozzuoli) (AFV-2) protein is Putative glycosyltransferase ORF330.